The chain runs to 212 residues: Putative DNA-binding protein At1g48610 (212 aa).

The segment at 1 to 130 (MAKTALTPPA…GRPKKDDVAA (130 aa)) is disordered. Positions 27–44 (NKPQTDATGVSATDTASQ) are enriched in polar residues. 3 consecutive DNA-binding regions (a.T hook) follow at residues 45 to 56 (KRGRGRPPKAKS), 70 to 79 (TKPSGRPKRN), and 94 to 98 (KKRGR). Residues 57-72 (DSSQIGAVSAKASTKP) are compositionally biased toward polar residues. Residues 103–113 (TVTAAVVTTAT) are compositionally biased toward low complexity. Residues 118–127 (RKRGRPKKDD) constitute a DNA-binding region (a.T hook 4). Residues 176 to 210 (DLKKRTALLQKKVKEAAAKLKQAVTAIDEVQKLAD) adopt a coiled-coil conformation.

Its subcellular location is the nucleus. Functionally, may bind DNA. This Arabidopsis thaliana (Mouse-ear cress) protein is Putative DNA-binding protein At1g48610.